Here is a 131-residue protein sequence, read N- to C-terminus: Large ribosomal subunit protein bL21 (131 aa).

Positions Val111 to Glu131 are disordered.

Belongs to the bacterial ribosomal protein bL21 family. In terms of assembly, part of the 50S ribosomal subunit. Contacts protein L20.

This protein binds to 23S rRNA in the presence of protein L20. This is Large ribosomal subunit protein bL21 from Cereibacter sphaeroides (strain ATCC 17029 / ATH 2.4.9) (Rhodobacter sphaeroides).